The following is a 716-amino-acid chain: Iron-sulfur clusters transporter atm1, mitochondrial (716 aa).

The N-terminal 18 residues, 1-18, are a transit peptide targeting the mitochondrion; sequence MAPSIKLSTMATSLHRAH. The Mitochondrial matrix portion of the chain corresponds to 19–123; that stretch reads GTSALLRRPR…PKGSWGDKAR (105 aa). The interval 57–87 is disordered; it reads LFAPNGSAKDESKPAVSTVPKTTGRGPSDPL. A helical membrane pass occupies residues 124-145; it reads VLLAIGLLVGGKVLNVQVPFYF. The ABC transmembrane type-1 domain occupies 124–414; that stretch reads VLLAIGLLVG…LGSVYRELRQ (291 aa). The Mitochondrial intermembrane segment spans residues 146–168; that stretch reads REIVDSLNIDFSTTGGSVTAVAG. A helical membrane pass occupies residues 169–192; that stretch reads AMILGYGAARVGAVVSQELRNAVF. At 193-241 the chain is on the mitochondrial matrix side; sequence ASVAQKAIRKVARNTFEHLLNLDLSFHLSKQTGGLTRAIDRGTKGISFL. The helical transmembrane segment at 242–265 threads the bilayer; it reads LTSMVFHIVPTALEISMVCGILTY. A topological domain (mitochondrial intermembrane) is located at residue Asn-266. Residues 267 to 287 form a helical membrane-spanning segment; sequence FGWQYAALTALTMVSYTAFTI. Residues 288-353 are Mitochondrial matrix-facing; that stretch reads LTTAWRTKFR…NSIKVATSLA (66 aa). Glutathione-binding positions include 293-297 and 356-359; these read RTKFR and NSGQ. A helical membrane pass occupies residues 354-372; sequence FLNSGQNIIFSSALTVMMY. The Mitochondrial intermembrane portion of the chain corresponds to 373–387; it reads MGAHGVATGQLTVGD. Residues 388–409 traverse the membrane as a helical segment; it reads LVLINQLVFQLSVPLNFLGSVY. Gly-406 serves as a coordination point for glutathione. Over 410–716 the chain is Mitochondrial matrix; it reads RELRQSLLDM…KEEVGEKKEA (307 aa). In terms of domain architecture, ABC transporter spans 449–690; it reads IEFKDVTFGY…NGVYAQLWRA (242 aa). Residues Tyr-458 and 482–493 contribute to the ATP site; that span reads GPSGCGKSTLLR. A disordered region spans residues 697–716; sequence EEGEVSKKGEKEEVGEKKEA. Basic and acidic residues predominate over residues 700 to 716; that stretch reads EVSKKGEKEEVGEKKEA.

The protein belongs to the ABC transporter superfamily. ABCB family. Heavy Metal importer (TC 3.A.1.210) subfamily. Homodimer.

The protein localises to the mitochondrion inner membrane. Functionally, performs an essential function in the generation of cytoplasmic iron-sulfur proteins by mediating the ATP-dependent export of Fe/S cluster precursors synthesized by egt-3 and other mitochondrial proteins. Hydrolyzes ATP. Binds glutathione and may function by transporting a glutathione-conjugated iron-sulfur compound. This chain is Iron-sulfur clusters transporter atm1, mitochondrial, found in Neurospora crassa (strain ATCC 24698 / 74-OR23-1A / CBS 708.71 / DSM 1257 / FGSC 987).